A 668-amino-acid polypeptide reads, in one-letter code: Fructose-1,6-bisphosphatase class 3 (668 aa).

This sequence belongs to the FBPase class 3 family. It depends on Mn(2+) as a cofactor.

It carries out the reaction beta-D-fructose 1,6-bisphosphate + H2O = beta-D-fructose 6-phosphate + phosphate. The protein operates within carbohydrate biosynthesis; gluconeogenesis. The chain is Fructose-1,6-bisphosphatase class 3 from Clostridium botulinum (strain 657 / Type Ba4).